The chain runs to 261 residues: Uridylate kinase (261 aa).

Residues 1–23 (MTEPDVAGAPASKPEPASTGAAS) are disordered. 36-39 (KLGG) is a binding site for ATP. Residue glycine 77 coordinates UMP. Positions 78 and 82 each coordinate ATP. UMP-binding positions include aspartate 97 and 158–165 (MGLPYFST). ATP is bound by residues phenylalanine 191 and aspartate 194.

It belongs to the UMP kinase family. In terms of assembly, homohexamer.

It localises to the cytoplasm. The enzyme catalyses UMP + ATP = UDP + ADP. Its pathway is pyrimidine metabolism; CTP biosynthesis via de novo pathway; UDP from UMP (UMPK route): step 1/1. Inhibited by UTP. In terms of biological role, catalyzes the reversible phosphorylation of UMP to UDP. This Mycobacterium tuberculosis (strain ATCC 25177 / H37Ra) protein is Uridylate kinase.